A 372-amino-acid chain; its full sequence is Spermidine/putrescine import ATP-binding protein PotA (372 aa).

An ABC transporter domain is found at 11-241; sequence IELRSIKKSY…PANLFVARFI (231 aa). 43-50 is an ATP binding site; it reads GPSGCGKT.

This sequence belongs to the ABC transporter superfamily. Spermidine/putrescine importer (TC 3.A.1.11.1) family. As to quaternary structure, the complex is composed of two ATP-binding proteins (PotA), two transmembrane proteins (PotB and PotC) and a solute-binding protein (PotD).

The protein localises to the cell inner membrane. It carries out the reaction ATP + H2O + polyamine-[polyamine-binding protein]Side 1 = ADP + phosphate + polyamineSide 2 + [polyamine-binding protein]Side 1.. Part of the ABC transporter complex PotABCD involved in spermidine/putrescine import. Responsible for energy coupling to the transport system. The protein is Spermidine/putrescine import ATP-binding protein PotA of Haemophilus influenzae (strain 86-028NP).